The chain runs to 315 residues: Methionyl-tRNA formyltransferase (315 aa).

113 to 116 (SLLP) serves as a coordination point for (6S)-5,6,7,8-tetrahydrofolate.

The protein belongs to the Fmt family.

It catalyses the reaction L-methionyl-tRNA(fMet) + (6R)-10-formyltetrahydrofolate = N-formyl-L-methionyl-tRNA(fMet) + (6S)-5,6,7,8-tetrahydrofolate + H(+). Attaches a formyl group to the free amino group of methionyl-tRNA(fMet). The formyl group appears to play a dual role in the initiator identity of N-formylmethionyl-tRNA by promoting its recognition by IF2 and preventing the misappropriation of this tRNA by the elongation apparatus. This is Methionyl-tRNA formyltransferase from Klebsiella pneumoniae subsp. pneumoniae (strain ATCC 700721 / MGH 78578).